The chain runs to 508 residues: Photosystem II CP47 reaction center protein (508 aa).

The next 6 helical transmembrane spans lie at 21–36, 101–115, 140–156, 203–218, 237–252, and 457–472; these read SVHIMHTALVAGWAGS, IVFSGLCFLAAIWHW, GIHLFLSGVACFGFGAF, IAAGTLGILAGLFHLS, VLSSSIAAVFFAAFVV, and SFALLFFFGHIWHGAR.

The protein belongs to the PsbB/PsbC family. PsbB subfamily. As to quaternary structure, PSII is composed of 1 copy each of membrane proteins PsbA, PsbB, PsbC, PsbD, PsbE, PsbF, PsbH, PsbI, PsbJ, PsbK, PsbL, PsbM, PsbT, PsbX, PsbY, PsbZ, Psb30/Ycf12, at least 3 peripheral proteins of the oxygen-evolving complex and a large number of cofactors. It forms dimeric complexes. The cofactor is Binds multiple chlorophylls. PSII binds additional chlorophylls, carotenoids and specific lipids..

Its subcellular location is the plastid. The protein resides in the chloroplast thylakoid membrane. Its function is as follows. One of the components of the core complex of photosystem II (PSII). It binds chlorophyll and helps catalyze the primary light-induced photochemical processes of PSII. PSII is a light-driven water:plastoquinone oxidoreductase, using light energy to abstract electrons from H(2)O, generating O(2) and a proton gradient subsequently used for ATP formation. The sequence is that of Photosystem II CP47 reaction center protein from Lemna minor (Common duckweed).